The sequence spans 262 residues: F-actin-capping protein subunit alpha (262 aa).

Belongs to the F-actin-capping protein alpha subunit family. Heterodimer of an alpha and a beta subunit.

F-actin-capping proteins bind in a Ca(2+)-independent manner to the fast growing ends of actin filaments (barbed end) thereby blocking the exchange of subunits at these ends. Unlike other capping proteins (such as gelsolin and severin), these proteins do not sever actin filaments. In Kluyveromyces lactis (strain ATCC 8585 / CBS 2359 / DSM 70799 / NBRC 1267 / NRRL Y-1140 / WM37) (Yeast), this protein is F-actin-capping protein subunit alpha (CAP1).